A 303-amino-acid polypeptide reads, in one-letter code: MATKAAFARMNGLGNQIIVADMRGRADSITSAAAIRLASDSETAFDQIMAIHDPRTPGTDYYIAIINCDGTQAQACGNGTRCVVQALAAETGRHAFTFETRAGILTATEHDDGLISVDMGTPRFDWQDIPLAQAVADTRKIELQVDPADAPVLHSPSIASMGNPHAVFWVDKDVWSYELDKFGPLLENHPIFPERANISIAHVTSSDTIDLRTWERGAGLTRACGSAACAAAVSAARTGRTGRKVTVNVPGGPLLIEWRDDDHVMMTGPAEWEFSGTFDPATGEWSRDTQGLQGSGNADRGAA.

Residues Asn15, Gln47, and Asn67 each contribute to the substrate site. The active-site Proton donor is Cys76. Substrate contacts are provided by residues Gly77–Asn78, Asn163, Asn197, and Glu215–Arg216. Catalysis depends on Cys224, which acts as the Proton acceptor. Residue Gly225 to Ser226 participates in substrate binding. The disordered stretch occupies residues Phe278–Ala303.

This sequence belongs to the diaminopimelate epimerase family. Homodimer.

The protein localises to the cytoplasm. It carries out the reaction (2S,6S)-2,6-diaminopimelate = meso-2,6-diaminopimelate. It participates in amino-acid biosynthesis; L-lysine biosynthesis via DAP pathway; DL-2,6-diaminopimelate from LL-2,6-diaminopimelate: step 1/1. Its function is as follows. Catalyzes the stereoinversion of LL-2,6-diaminopimelate (L,L-DAP) to meso-diaminopimelate (meso-DAP), a precursor of L-lysine and an essential component of the bacterial peptidoglycan. This chain is Diaminopimelate epimerase, found in Brucella melitensis biotype 1 (strain ATCC 23456 / CCUG 17765 / NCTC 10094 / 16M).